Reading from the N-terminus, the 380-residue chain is LYCKEHGILPDGRLDQNRMDDESAESFFSQTSVGTYVPRTLMVDLEPGVLESIKTGKYRELYHPGQLISGKEDAANNYARGHYTVGKEIIEPVMEQIRRMADNCDGLQGFLIYHSFGGGTGSGFASLMMDRLAAEFGKKSKLEFSVYPAPKIATAVVEPYNSILTTHTTLDYSDCSFLVDNEAIYDMCRNLGIQRPYYTDINRIIAQVVSSITASLRFPGSLNVDLTEFQTNLVPYPRIHFPLVAYSPMLSKEKAAHEKLSVQEITNACFEPQSQMVRCDTRKGKYMACCLLFRGDVNPKDANTATANVKAKRTNQFVEWCPTGFKVGINSRKPTVLDGEAMAEVSRAVCALSNTTAISEAWKRLNNKFDLMFSKRAFVH.

Residues E46, S115, G119, T120, T154, N181, and N202 each coordinate GTP. E46 is a Mg(2+) binding site. E228 is a catalytic residue.

The protein belongs to the tubulin family. Dimer of alpha and beta chains. A typical microtubule is a hollow water-filled tube with an outer diameter of 25 nm and an inner diameter of 15 nM. Alpha-beta heterodimers associate head-to-tail to form protofilaments running lengthwise along the microtubule wall with the beta-tubulin subunit facing the microtubule plus end conferring a structural polarity. Microtubules usually have 13 protofilaments but different protofilament numbers can be found in some organisms and specialized cells. Requires Mg(2+) as cofactor.

The protein localises to the cytoplasm. It localises to the cytoskeleton. The enzyme catalyses GTP + H2O = GDP + phosphate + H(+). Tubulin is the major constituent of microtubules, a cylinder consisting of laterally associated linear protofilaments composed of alpha- and beta-tubulin heterodimers. Microtubules grow by the addition of GTP-tubulin dimers to the microtubule end, where a stabilizing cap forms. Below the cap, tubulin dimers are in GDP-bound state, owing to GTPase activity of alpha-tubulin. The chain is Tubulin alpha chain (TUB1) from Encephalitozoon hellem (Microsporidian parasite).